An 86-amino-acid polypeptide reads, in one-letter code: Small ribosomal subunit protein bS20 (86 aa).

The protein belongs to the bacterial ribosomal protein bS20 family.

Functionally, binds directly to 16S ribosomal RNA. The protein is Small ribosomal subunit protein bS20 of Bifidobacterium adolescentis (strain ATCC 15703 / DSM 20083 / NCTC 11814 / E194a).